The following is a 36-amino-acid chain: Thrombin-like enzyme TLP (36 aa).

The Peptidase S1 domain maps to 1–36 (IGGFECNEHEHRSLVYLYNSAGFFCAGTLLNHEWVV).

This sequence belongs to the peptidase S1 family. Snake venom subfamily. In terms of assembly, monomer. In terms of tissue distribution, expressed by the venom gland.

It is found in the secreted. In terms of biological role, thrombin-like snake venom serine protease. Shows strong hydrolytic activity towards Boc-Asp(oBzl)-Pro-Arg-MCA, a synthetic substrate for thrombin. In Naja naja (Indian cobra), this protein is Thrombin-like enzyme TLP.